The primary structure comprises 64 residues: Potassium channel toxin kappa-KTx 3.4 (64 aa).

A signal peptide spans 1 to 26 (MKSTLMTASLLILVLLSIIDYASVYA). Residues 27–36 (EFIDSEISLE) constitute a propeptide that is removed on maturation. 2 disulfides stabilise this stretch: cysteine 43–cysteine 61 and cysteine 47–cysteine 57.

The protein belongs to the short scorpion toxin superfamily. Potassium channel inhibitor kappa-KTx family. Kappa-KTx 3 subfamily. In terms of tissue distribution, expressed by the venom gland.

The protein localises to the secreted. Functionally, potassium channel inhibitor (Kv). This chain is Potassium channel toxin kappa-KTx 3.4, found in Heterometrus petersii (Asian forest scorpion).